The following is a 199-amino-acid chain: Ribonuclease HII (199 aa).

Residues 13-199 (GLVAGVDEVG…FAPIAKILCG (187 aa)) enclose the RNase H type-2 domain. 3 residues coordinate a divalent metal cation: Asp-19, Glu-20, and Asp-110.

Belongs to the RNase HII family. It depends on Mn(2+) as a cofactor. The cofactor is Mg(2+).

The protein localises to the cytoplasm. It catalyses the reaction Endonucleolytic cleavage to 5'-phosphomonoester.. Its function is as follows. Endonuclease that specifically degrades the RNA of RNA-DNA hybrids. This Jannaschia sp. (strain CCS1) protein is Ribonuclease HII.